The sequence spans 131 residues: UPF0102 protein CYA_0708 (131 aa).

It belongs to the UPF0102 family.

This is UPF0102 protein CYA_0708 from Synechococcus sp. (strain JA-3-3Ab) (Cyanobacteria bacterium Yellowstone A-Prime).